A 348-amino-acid chain; its full sequence is Eukaryotic translation initiation factor 3 subunit F (348 aa).

Residues Val30–Gly166 enclose the MPN domain. Positions Ser312–Gly327 are enriched in gly residues. The segment at Ser312–Ala348 is disordered. A compositionally biased stretch (low complexity) spans Gly328–Asn341.

Belongs to the eIF-3 subunit F family. Component of the eukaryotic translation initiation factor 3 (eIF-3) complex.

Its subcellular location is the cytoplasm. Component of the eukaryotic translation initiation factor 3 (eIF-3) complex, which is involved in protein synthesis of a specialized repertoire of mRNAs and, together with other initiation factors, stimulates binding of mRNA and methionyl-tRNAi to the 40S ribosome. The eIF-3 complex specifically targets and initiates translation of a subset of mRNAs involved in cell proliferation. This Coccidioides immitis (strain RS) (Valley fever fungus) protein is Eukaryotic translation initiation factor 3 subunit F.